The primary structure comprises 680 residues: DNA-directed RNA polymerase subunit beta' (680 aa).

Positions 69, 71, 87, and 90 each coordinate Zn(2+). Residues Asp489, Asp491, and Asp493 each coordinate Mg(2+).

The protein belongs to the RNA polymerase beta' chain family. RpoC1 subfamily. In plastids the minimal PEP RNA polymerase catalytic core is composed of four subunits: alpha, beta, beta', and beta''. When a (nuclear-encoded) sigma factor is associated with the core the holoenzyme is formed, which can initiate transcription. It depends on Mg(2+) as a cofactor. Zn(2+) serves as cofactor.

It is found in the plastid. The protein localises to the chloroplast. The enzyme catalyses RNA(n) + a ribonucleoside 5'-triphosphate = RNA(n+1) + diphosphate. Functionally, DNA-dependent RNA polymerase catalyzes the transcription of DNA into RNA using the four ribonucleoside triphosphates as substrates. In Ceratophyllum demersum (Rigid hornwort), this protein is DNA-directed RNA polymerase subunit beta'.